Consider the following 215-residue polypeptide: Peptide methionine sulfoxide reductase MsrA (215 aa).

The active site involves C58.

Belongs to the MsrA Met sulfoxide reductase family.

The enzyme catalyses L-methionyl-[protein] + [thioredoxin]-disulfide + H2O = L-methionyl-(S)-S-oxide-[protein] + [thioredoxin]-dithiol. It carries out the reaction [thioredoxin]-disulfide + L-methionine + H2O = L-methionine (S)-S-oxide + [thioredoxin]-dithiol. Functionally, has an important function as a repair enzyme for proteins that have been inactivated by oxidation. Catalyzes the reversible oxidation-reduction of methionine sulfoxide in proteins to methionine. This chain is Peptide methionine sulfoxide reductase MsrA, found in Pseudomonas aeruginosa (strain LESB58).